A 359-amino-acid polypeptide reads, in one-letter code: MEIKVLECLKRLEEVEKQISDPNIFSNPKEYSSLSKEHARLSEIKNAHESLVATKKILQDDKLALSTEKDPEIVAMLEEGVLVGEEAVERLSKQLENLLIPPDPDDDLSVIMELRAGTGGDEAALFVGDCVRMYHLYAASKGWQCEVLSTSESDLGGYKEYVMGISGASVKRFLQYEAGTHRVQRVPETETQGRVHTSAVTVAVLPEPAEDDEEVFIDEKDLRIDTFRSSGAGGQHVNVTDSAVRITHIPSGVVVTCQDERSQHKNKAKAMRVLKARIRDAEVQKRAQEASAMRSAQVGSGDRSERIRTYNFPQNRVTDHRIGLTLYNLDRVMEGELDMITTALVTHVHRQLFGHEETA.

Gln-235 is modified (N5-methylglutamine). The interval 287 to 312 (AQEASAMRSAQVGSGDRSERIRTYNF) is disordered.

This sequence belongs to the prokaryotic/mitochondrial release factor family. Post-translationally, methylated by PrmC. Methylation increases the termination efficiency of RF1.

It localises to the cytoplasm. Peptide chain release factor 1 directs the termination of translation in response to the peptide chain termination codons UAG and UAA. The sequence is that of Peptide chain release factor 1 from Chlamydia trachomatis serovar A (strain ATCC VR-571B / DSM 19440 / HAR-13).